The following is a 2209-amino-acid chain: Genome polyprotein (2209 aa).

Residue Gly2 is the site of N-myristoyl glycine; by host attachment. Over 2 to 1520 (GAQVSSQKVG…NINRAMTILQ (1519 aa)) the chain is Cytoplasmic. An amphipathic alpha-helix region spans residues 580-600 (GLGQMLESMIDNTVRETVGAA). The disordered stretch occupies residues 599–619 (AATSRDALPNTEASGPTHSKE). Residues His901 and Asp919 each act as for protease 2A activity in the active site. Residues Cys936 and Cys938 each coordinate Zn(2+). The active-site For protease 2A activity is the Cys990. Positions 996 and 998 each coordinate Zn(2+). The tract at residues 1128 to 1200 (GDSWLKKFTE…HQSCPSQEHQ (73 aa)) is membrane-binding. The interval 1128 to 1266 (GDSWLKKFTE…SPGTGKSVAT (139 aa)) is oligomerization. The segment at 1149–1153 (SNKIS) is RNA-binding. The SF3 helicase domain occupies 1232 to 1388 (EHTINNYIQF…NEYSRDGKLN (157 aa)). 1256–1263 (GSPGTGKS) is an ATP binding site. Residues Cys1396, Cys1399, Cys1408, and Cys1413 each contribute to the Zn(2+) site. The C4-type zinc finger occupies 1396–1413 (CKNCHQPANFKRCCPLVC). The segment at 1440 to 1447 (ERNRRSNI) is RNA-binding. The tract at residues 1451-1456 (MEALFQ) is oligomerization. Residues 1521 to 1536 (AVTTFAAVAGVVYVMY) lie within the membrane without spanning it. The Cytoplasmic segment spans residues 1537–2209 (KLFAGHQGAY…TLYRRWLDSF (673 aa)). O-(5'-phospho-RNA)-tyrosine is present on Tyr1546. Tyr1546 carries the post-translational modification O-UMP-tyrosine; transient. One can recognise a Peptidase C3 domain in the interval 1566 to 1744 (GPGFDYAVAM…FAAALKRSYF (179 aa)). Catalysis depends on for protease 3C activity residues His1605, Glu1636, and Cys1712. Residues 1975–2090 (EKLFAFDYTG…SYPHEVDASL (116 aa)) enclose the RdRp catalytic domain. 2 residues coordinate Mg(2+): Asp1981 and Asp2076.

The protein belongs to the picornaviruses polyprotein family. Interacts with capsid protein VP1 and capsid protein VP3 to form heterotrimeric protomers. As to quaternary structure, interacts with capsid protein VP0, and capsid protein VP3 to form heterotrimeric protomers. Five protomers subsequently associate to form pentamers which serve as building blocks for the capsid. Interacts with capsid protein VP2, capsid protein VP3 and capsid protein VP4 following cleavage of capsid protein VP0. Interacts with human PVR. In terms of assembly, interacts with capsid protein VP1 and capsid protein VP3 in the mature capsid. Interacts with capsid protein VP0 and capsid protein VP1 to form heterotrimeric protomers. Five protomers subsequently associate to form pentamers which serve as building blocks for the capsid. Interacts with capsid protein VP4 in the mature capsid. Interacts with protein 2C; this interaction may be important for virion morphogenesis. As to quaternary structure, interacts with capsid protein VP1 and capsid protein VP3. In terms of assembly, homodimer. Homohexamer; forms a hexameric ring structure with 6-fold symmetry characteristic of AAA+ ATPases. Interacts (via N-terminus) with host RTN3 (via reticulon domain); this interaction is important for viral replication. Interacts with capsid protein VP3; this interaction may be important for virion morphogenesis. As to quaternary structure, interacts with protein 3CD. In terms of assembly, homodimer. Interacts with host GBF1. Interacts (via GOLD domain) with host ACBD3 (via GOLD domain); this interaction allows the formation of a viral protein 3A/ACBD3 heterotetramer with a 2:2 stoichiometry, which will stimulate the recruitment of host PI4KB in order to synthesize PI4P at the viral RNA replication sites. Interacts with RNA-directed RNA polymerase. As to quaternary structure, interacts with protein 3AB and with RNA-directed RNA polymerase. In terms of assembly, interacts with Viral protein genome-linked and with protein 3CD. Mg(2+) is required as a cofactor. In terms of processing, specific enzymatic cleavages in vivo by the viral proteases yield processing intermediates and the mature proteins. Post-translationally, myristoylation is required for the formation of pentamers during virus assembly. Further assembly of 12 pentamers and a molecule of genomic RNA generates the provirion. During virion maturation, immature virions are rendered infectious following cleavage of VP0 into VP4 and VP2. This maturation seems to be an autocatalytic event triggered by the presence of RNA in the capsid and it is followed by a conformational change infectious virion. In terms of processing, myristoylation is required during RNA encapsidation and formation of the mature virus particle. Post-translationally, VPg is uridylylated by the polymerase into VPg-pUpU. This acts as a nucleotide-peptide primer for the genomic RNA replication.

It localises to the virion. The protein resides in the host cytoplasm. The protein localises to the host cytoplasmic vesicle membrane. Its subcellular location is the host nucleus. The catalysed reaction is RNA(n) + a ribonucleoside 5'-triphosphate = RNA(n+1) + diphosphate. It catalyses the reaction Selective cleavage of Tyr-|-Gly bond in the picornavirus polyprotein.. It carries out the reaction a ribonucleoside 5'-triphosphate + H2O = a ribonucleoside 5'-diphosphate + phosphate + H(+). The enzyme catalyses Selective cleavage of Gln-|-Gly bond in the poliovirus polyprotein. In other picornavirus reactions Glu may be substituted for Gln, and Ser or Thr for Gly.. Replication or transcription is subject to high level of random mutations by the nucleotide analog ribavirin. In terms of biological role, forms an icosahedral capsid of pseudo T=3 symmetry with capsid proteins VP2 and VP3. The capsid is 300 Angstroms in diameter, composed of 60 copies of each capsid protein and enclosing the viral positive strand RNA genome. Capsid protein VP1 mainly forms the vertices of the capsid. Capsid protein VP1 interacts with host cell receptor PVR to provide virion attachment to target host epithelial cells. This attachment induces virion internalization predominantly through clathrin- and caveolin-independent endocytosis in Hela cells and through caveolin-mediated endocytosis in brain microvascular endothelial cells. Tyrosine kinases are probably involved in the entry process. Virus binding to PVR induces increased junctional permeability and rearrangement of junctional proteins. Modulation of endothelial tight junctions, as well as cytolytic infection of endothelial cells themselves, may result in loss of endothelial integrity which may help the virus to reach the CNS. After binding to its receptor, the capsid undergoes conformational changes. Capsid protein VP1 N-terminus (that contains an amphipathic alpha-helix) and capsid protein VP4 are externalized. Together, they shape a pore in the host membrane through which viral genome is translocated to host cell cytoplasm. Its function is as follows. Forms an icosahedral capsid of pseudo T=3 symmetry with capsid proteins VP1 and VP3. The capsid is 300 Angstroms in diameter, composed of 60 copies of each capsid protein and enclosing the viral positive strand RNA genome. Forms an icosahedral capsid of pseudo T=3 symmetry with capsid proteins VP2 and VP1. The capsid is 300 Angstroms in diameter, composed of 60 copies of each capsid protein and enclosing the viral positive strand RNA genome. Functionally, lies on the inner surface of the capsid shell. After binding to the host receptor, the capsid undergoes conformational changes. Capsid protein VP4 is released, Capsid protein VP1 N-terminus is externalized, and together, they shape a pore in the host membrane through which the viral genome is translocated into the host cell cytoplasm. In terms of biological role, component of immature procapsids, which is cleaved into capsid proteins VP4 and VP2 after maturation. Allows the capsid to remain inactive before the maturation step. Its function is as follows. Cysteine protease that cleaves viral polyprotein and specific host proteins. It is responsible for the autocatalytic cleavage between the P1 and P2 regions, which is the first cleavage occurring in the polyprotein. Also cleaves the host translation initiation factor EIF4G1, in order to shut down the capped cellular mRNA translation. Inhibits the host nucleus-cytoplasm protein and RNA trafficking by cleaving host members of the nuclear pores including NUP98, NUP62 and NUP153. Counteracts stress granule formation probably by antagonizing its assembly or promoting its dissassembly. Cleaves and inhibits host IFIH1/MDA5, thereby inhibiting the type-I IFN production and the establishment of the antiviral state. Cleaves and inhibits host MAVS, thereby inhibiting the type-I IFN production and the establishment of the antiviral state. Plays an essential role in the virus replication cycle by acting as a viroporin. Creates a pore in the host endoplasmic reticulum and as a consequence releases Ca2+ in the cytoplasm of infected cell. In turn, high levels of cytoplasmic calcium may trigger membrane trafficking and transport of viral ER-associated proteins to viroplasms, sites of viral genome replication. Functionally, induces and associates with structural rearrangements of intracellular membranes. Displays RNA-binding, nucleotide binding and NTPase activities. May play a role in virion morphogenesis and viral RNA encapsidation by interacting with the capsid protein VP3. In terms of biological role, localizes the viral replication complex to the surface of membranous vesicles. Together with protein 3CD binds the Cis-Active RNA Element (CRE) which is involved in RNA synthesis initiation. Acts as a cofactor to stimulate the activity of 3D polymerase, maybe through a nucleid acid chaperone activity. Its function is as follows. Localizes the viral replication complex to the surface of membranous vesicles. It inhibits host cell endoplasmic reticulum-to-Golgi apparatus transport and causes the disassembly of the Golgi complex, possibly through GBF1 interaction. This would result in depletion of MHC, trail receptors and IFN receptors at the host cell surface. Plays an essential role in viral RNA replication by recruiting ACBD3 and PI4KB at the viral replication sites, thereby allowing the formation of the rearranged membranous structures where viral replication takes place. Acts as a primer for viral RNA replication and remains covalently bound to viral genomic RNA. VPg is uridylylated prior to priming replication into VPg-pUpU. The oriI viral genomic sequence may act as a template for this. The VPg-pUpU is then used as primer on the genomic RNA poly(A) by the RNA-dependent RNA polymerase to replicate the viral genome. During genome replication, the VPg-RNA linkage is removed by the host TDP2, thereby accelerating replication. During the late stage of the replication cycle, host TDP2 is excluded from sites of viral RNA synthesis and encapsidation, allowing for the generation of progeny virions. Functionally, involved in the viral replication complex and viral polypeptide maturation. It exhibits protease activity with a specificity and catalytic efficiency that is different from protease 3C. Protein 3CD binds to the 5'UTR of the viral genome. In terms of biological role, major viral protease that mediates proteolytic processing of the polyprotein. Cleaves host EIF5B, contributing to host translation shutoff. Cleaves also host PABPC1, contributing to host translation shutoff. Cleaves host RIGI and thus contributes to the inhibition of type I interferon production. Cleaves host NLRP1, triggers host N-glycine-mediated degradation of the autoinhibitory NLRP1 N-terminal fragment. Inhibits the integrated stress response (ISR) in the infected cell by cleaving host G3BP1. Stress granule formation is thus inhibited, which allows protein synthesis and viral replication. Its function is as follows. Replicates the viral genomic RNA on the surface of intracellular membranes. May form linear arrays of subunits that propagate along a strong head-to-tail interaction called interface-I. Covalently attaches UMP to a tyrosine of VPg, which is used to prime RNA synthesis. The positive stranded RNA genome is first replicated at virus induced membranous vesicles, creating a dsRNA genomic replication form. This dsRNA is then used as template to synthesize positive stranded RNA genomes. ss(+)RNA genomes are either translated, replicated or encapsidated. The chain is Genome polyprotein from Homo sapiens (Human).